The primary structure comprises 113 residues: Dynein light chain Tctex-type 1 (113 aa).

Position 1 is an N-acetylmethionine (Met1). The interaction with GNB1 stretch occupies residues 41-113 (QWTTNVVEQT…CIVSAFGLSI (73 aa)).

This sequence belongs to the dynein light chain Tctex-type family. In terms of assembly, homodimer. The cytoplasmic dynein 1 complex consists of two catalytic heavy chains (HCs) and a number of non-catalytic subunits presented by intermediate chains (ICs), light intermediate chains (LICs) and light chains (LCs); the composition seems to vary in respect to the IC, LIC and LC composition. The heavy chain homodimer serves as a scaffold for the probable homodimeric assembly of the non-catalytic subunits. The ICs and LICs bind directly to the HC dimer and the LCs assemble on the IC dimer. DYNLT1 and DYNLT3 compete for association with dynein IC (DYNC1I1 or DYNC1I2). Self-associates. Interacts with RHO. Interacts with DYNC1I1 and DYNC1I2. Interacts with DOC2A, DOC2B and SCN10A. Interacts with PVR. Interacts with SVIL isoform 2. Interacts with GNB1; the interaction occurs in presence of guanine nucleotide-binding protein G(T) subunit gamma; the interaction diminishes the association of DYNLT1 with dynein IC (DYNC1I1 or DYNC1I2). Interacts with GNB2, GNB3 and GNB5; the interactions occur in presence of guanine nucleotide-binding protein G(T) subunit gamma. Interacts with ACVR2B and ARHGEF2. Interacts with DNAI4. Interacts with CFAP61. Post-translationally, phosphorylated by BMPR2. The phosphorylation status is proposed to regulate the association with the cytoplasmic dynein complex and may have role in cytoplasmic dynein cargo release.

The protein resides in the golgi apparatus. The protein localises to the cytoplasm. Its subcellular location is the cytoskeleton. It localises to the spindle. Functionally, acts as one of several non-catalytic accessory components of the cytoplasmic dynein 1 complex that are thought to be involved in linking dynein to cargos and to adapter proteins that regulate dynein function. Cytoplasmic dynein 1 acts as a motor for the intracellular retrograde motility of vesicles and organelles along microtubules. Binds to transport cargos and is involved in apical cargo transport such as rhodopsin-bearing vesicles in polarized epithelia. May also be a accessory component of axonemal dynein. Plays a role in neuronal morphogenesis; the function is independent of cytoplasmic dynein and seems to be coupled to regulation of the actin cytoskeleton by enhancing Rac1 activity. The function in neurogenesis may be regulated by association with a G-protein beta-gamma dimer. May function as a receptor-independent activator of heterotrimeric G-protein signaling; the activation appears to be independent of a nucleotide exchange. Plays a role in regulating neurogenesis; inhibits the genesis of neurons from precursor cells during cortical development presumably by antagonizing ARHGEF2. Involved in the regulation of mitotic spindle orientation. Unrelated to the role in retrograde microtubule-associated movement may play a role in the dimerization of cytoplasmic proteins/domains such as for ACVR2B. Binds to the cytoplasmic domain of ACVR2B and, in vitro, inhibits ACVR2B signaling. The polypeptide is Dynein light chain Tctex-type 1 (DYNLT1) (Bos taurus (Bovine)).